Reading from the N-terminus, the 171-residue chain is Large ribosomal subunit protein bL9 (171 aa).

The protein belongs to the bacterial ribosomal protein bL9 family.

Its function is as follows. Binds to the 23S rRNA. The sequence is that of Large ribosomal subunit protein bL9 from Rickettsia canadensis (strain McKiel).